We begin with the raw amino-acid sequence, 113 residues long: Putative single-stranded DNA-binding protein ycf41 (113 aa).

The 101-residue stretch at Met1 to Phe101 folds into the SSB domain.

It localises to the plastid. It is found in the chloroplast. The sequence is that of Putative single-stranded DNA-binding protein ycf41 (ycf41) from Trieres chinensis (Marine centric diatom).